The sequence spans 1598 residues: Structural maintenance of chromosomes flexible hinge domain-containing protein GMI1 (1598 aa).

The segment at 1191 to 1218 is disordered; the sequence is VTSAPTSEREESGYSTPHSKTTPPPESG. Coiled-coil stretches lie at residues 1258–1301 and 1565–1595; these read TEDL…ASLE and EEMM…FTAM.

In terms of tissue distribution, highly expressed in closed buds and open flowers. Expressed at low levels in roots, stems, cauline leaves and siliques. Expressed in the region of the shoot and floral meristems.

The protein resides in the nucleus. Contributes to DNA double-strand break (DSB) repair via somatic homologous recombination. Functions downstream of ATM. This is Structural maintenance of chromosomes flexible hinge domain-containing protein GMI1 from Arabidopsis thaliana (Mouse-ear cress).